A 922-amino-acid chain; its full sequence is Translation initiation factor IF-2 (922 aa).

The segment at 33-310 (KTASSTVQPP…SKRQKRNEYE (278 aa)) is disordered. The segment covering 75 to 87 (PAAKAAPKAAAKP) has biased composition (low complexity). Pro residues-rich tracts occupy residues 88–98 (GPKPGPKPGPQ) and 140–150 (TPKPGAKPGPK). Low complexity-rich tracts occupy residues 151–169 (PGGAKPGAKPGPKPGGRAP) and 202–211 (PGSRPGGAKK). Gly residues-rich tracts occupy residues 215 to 225 (KPGGAKQGGGR) and 248 to 292 (FGGG…GRPG). The span at 296–305 (RKGRKSKRQK) shows a compositional bias: basic residues. A tr-type G domain is found at 418 to 590 (QRPPVVTVMG…VLLTADASLD (173 aa)). The tract at residues 427–434 (GHVDHGKT) is G1. 427 to 434 (GHVDHGKT) lines the GTP pocket. The segment at 452–456 (GITQH) is G2. A G3 region spans residues 477 to 480 (DTPG). Residues 477 to 481 (DTPGH) and 531 to 534 (NKID) contribute to the GTP site. The interval 531–534 (NKID) is G4. The interval 567 to 569 (SAK) is G5.

This sequence belongs to the TRAFAC class translation factor GTPase superfamily. Classic translation factor GTPase family. IF-2 subfamily.

The protein resides in the cytoplasm. Its function is as follows. One of the essential components for the initiation of protein synthesis. Protects formylmethionyl-tRNA from spontaneous hydrolysis and promotes its binding to the 30S ribosomal subunits. Also involved in the hydrolysis of GTP during the formation of the 70S ribosomal complex. This is Translation initiation factor IF-2 from Corynebacterium jeikeium (strain K411).